The sequence spans 514 residues: 2-isopropylmalate synthase (514 aa).

Residues 5–268 (LIIFDTTLRD…DVGIDTSQIV (264 aa)) enclose the Pyruvate carboxyltransferase domain. Residues aspartate 14, histidine 202, histidine 204, and asparagine 239 each coordinate Mn(2+). Positions 395-514 (KFVSLSQHSE…KDDKVNPQRS (120 aa)) are regulatory domain.

Belongs to the alpha-IPM synthase/homocitrate synthase family. LeuA type 1 subfamily. In terms of assembly, homodimer. Mn(2+) is required as a cofactor.

It is found in the cytoplasm. The catalysed reaction is 3-methyl-2-oxobutanoate + acetyl-CoA + H2O = (2S)-2-isopropylmalate + CoA + H(+). Its pathway is amino-acid biosynthesis; L-leucine biosynthesis; L-leucine from 3-methyl-2-oxobutanoate: step 1/4. Its function is as follows. Catalyzes the condensation of the acetyl group of acetyl-CoA with 3-methyl-2-oxobutanoate (2-ketoisovalerate) to form 3-carboxy-3-hydroxy-4-methylpentanoate (2-isopropylmalate). The chain is 2-isopropylmalate synthase from Burkholderia lata (strain ATCC 17760 / DSM 23089 / LMG 22485 / NCIMB 9086 / R18194 / 383).